The sequence spans 201 residues: Phosphoheptose isomerase 2 (201 aa).

The SIS domain maps to Val39–Ser198. Asn54–Gly56 is a binding site for substrate. Zn(2+) contacts are provided by His63 and Glu67. Residues Glu67, Asn96–Asp97, Ser122–Ser124, Ser127, and Gln174 each bind substrate. Zn(2+)-binding residues include Gln174 and His182.

Belongs to the SIS family. GmhA subfamily. As to quaternary structure, homotetramer. The cofactor is Zn(2+).

The protein localises to the cytoplasm. It catalyses the reaction 2 D-sedoheptulose 7-phosphate = D-glycero-alpha-D-manno-heptose 7-phosphate + D-glycero-beta-D-manno-heptose 7-phosphate. It participates in carbohydrate biosynthesis; D-glycero-D-manno-heptose 7-phosphate biosynthesis; D-glycero-alpha-D-manno-heptose 7-phosphate and D-glycero-beta-D-manno-heptose 7-phosphate from sedoheptulose 7-phosphate: step 1/1. The protein operates within capsule biogenesis; capsule polysaccharide biosynthesis. Catalyzes the isomerization of sedoheptulose 7-phosphate in D-glycero-D-manno-heptose 7-phosphate. No activity with L-galacto-heptulose, L-galacto-heptulose 7-phosphate or D-manno-heptulose. The sequence is that of Phosphoheptose isomerase 2 from Campylobacter jejuni subsp. jejuni serotype O:2 (strain ATCC 700819 / NCTC 11168).